A 440-amino-acid chain; its full sequence is Ribosomal protein uS12 methylthiotransferase RimO (440 aa).

The region spanning 5 to 115 (PTVGFVSLGC…VVNAVHEVVP (111 aa)) is the MTTase N-terminal domain. Cys14, Cys50, Cys79, Cys148, Cys152, and Cys155 together coordinate [4Fe-4S] cluster. The Radical SAM core domain maps to 134 to 372 (LTPRHYAYLK…MAHQQAISAA (239 aa)). Residues 375 to 440 (QLKVGKELDV…DEYDLWAEVI (66 aa)) enclose the TRAM domain.

Belongs to the methylthiotransferase family. RimO subfamily. It depends on [4Fe-4S] cluster as a cofactor.

Its subcellular location is the cytoplasm. It carries out the reaction L-aspartate(89)-[ribosomal protein uS12]-hydrogen + (sulfur carrier)-SH + AH2 + 2 S-adenosyl-L-methionine = 3-methylsulfanyl-L-aspartate(89)-[ribosomal protein uS12]-hydrogen + (sulfur carrier)-H + 5'-deoxyadenosine + L-methionine + A + S-adenosyl-L-homocysteine + 2 H(+). Its function is as follows. Catalyzes the methylthiolation of an aspartic acid residue of ribosomal protein uS12. This Stutzerimonas stutzeri (strain A1501) (Pseudomonas stutzeri) protein is Ribosomal protein uS12 methylthiotransferase RimO.